The primary structure comprises 526 residues: Peptide chain release factor 3 (526 aa).

The 270-residue stretch at 8–277 (GKRRTFAIIS…GLTEWAPAPQ (270 aa)) folds into the tr-type G domain. Residues 17-24 (SHPDAGKT), 85-89 (DTPGH), and 139-142 (NKMD) each bind GTP.

This sequence belongs to the TRAFAC class translation factor GTPase superfamily. Classic translation factor GTPase family. PrfC subfamily.

The protein localises to the cytoplasm. Functionally, increases the formation of ribosomal termination complexes and stimulates activities of RF-1 and RF-2. It binds guanine nucleotides and has strong preference for UGA stop codons. It may interact directly with the ribosome. The stimulation of RF-1 and RF-2 is significantly reduced by GTP and GDP, but not by GMP. The polypeptide is Peptide chain release factor 3 (Aliivibrio salmonicida (strain LFI1238) (Vibrio salmonicida (strain LFI1238))).